We begin with the raw amino-acid sequence, 126 residues long: SNRPMPLNTYQFKNMIQCTVPKRSWWDFADYGCYCGRGGSGTPIDDLDRCCQVHDNCYNSAREQGGCRPKQKTYSYECKAGTLSCSGSNNSCAATVCDCDRLAAICFAGAPYNDNNYNIDLKARCQ.

Positions 1–7 (SNRPMPL) are excised as a propeptide. 7 disulfides stabilise this stretch: C18-C78, C33-C125, C35-C51, C50-C106, C57-C99, C67-C92, and C85-C97. 3 residues coordinate Ca(2+): Y34, G36, and G38. H54 is a catalytic residue. Position 55 (D55) interacts with Ca(2+). Residue D100 is part of the active site.

Belongs to the phospholipase A2 family. Group I subfamily. D49 sub-subfamily. In terms of assembly, heterodimer formed between two homologous isoforms: isoform 1 and isoform 2. Requires Ca(2+) as cofactor. In terms of tissue distribution, expressed by the venom gland.

It is found in the secreted. The enzyme catalyses a 1,2-diacyl-sn-glycero-3-phosphocholine + H2O = a 1-acyl-sn-glycero-3-phosphocholine + a fatty acid + H(+). In terms of biological role, PLA2 catalyzes the calcium-dependent hydrolysis of the 2-acyl groups in 3-sn-phosphoglycerides. The chain is Basic phospholipase A2 1 from Naja sagittifera (Andaman cobra).